The sequence spans 707 residues: E3 ubiquitin-protein ligase Praja-2 (707 aa).

Residues 1–10 are compositionally biased toward basic and acidic residues; the sequence is MSQYTEKEPS. Disordered regions lie at residues 1 to 32, 72 to 120, and 250 to 314; these read MSQYTEKEPSVMDQESSKAAWPKPAGGYQTIT, PKEN…PSIA, and QNGQ…VRPK. N-acetylserine is present on Ser-2. Polar residues-rich tracts occupy residues 74–83 and 109–119; these read ENTSGSSSLD and LNQSTESSPSI. The segment covering 257–276 has biased composition (basic and acidic residues); the sequence is RSSEDGVVRKRRQDDTDQGR. Residues 293 to 308 are compositionally biased toward polar residues; that stretch reads EQNTSDRANHHGSSPE. Phosphoserine is present on residues Ser-306 and Ser-320. Ser-339 is modified (phosphoserine; by PKA). Disordered stretches follow at residues 379-405 and 424-493; these read RVTQRETERNRVTSENGATASGRQESR and EDSS…QTSL. A compositionally biased stretch (basic and acidic residues) spans 381–390; sequence TQRETERNRV. Thr-385 carries the phosphothreonine; by PKA modification. Positions 391-401 are enriched in polar residues; it reads TSENGATASGR. Ser-430 carries the phosphoserine modification. Over residues 465–481 the composition is skewed to acidic residues; that stretch reads NDPELQSDSSGPEEENQ. Polar residues predominate over residues 482 to 491; sequence ELSLQEGEQT. An interaction with PRKAR1A, PRKAR2A and PRKAR2B region spans residues 530–707; it reads DGNNNLEDDS…PANDNAEEAP (178 aa). The tract at residues 549–569 is mediates interaction with TBC1D31; the sequence is WSLFDGFADGLGVAEAISYVD. The RING-type; atypical zinc finger occupies 633–674; the sequence is CPICCSEYIKDDIATELPCHHFFHKPCVSIWLQKSGTCPVCR. Residues 685 to 701 show a composition bias toward low complexity; that stretch reads SAAASSDPDPDASPAND. Residues 685-707 are disordered; sequence SAAASSDPDPDASPANDNAEEAP.

In terms of assembly, binds ubiquitin-conjugating enzymes (E2s). In vitro, interacts with the ubiquitin-conjugating enzyme, UBE2D2. The phosphorylated form interacts with PRKAR1A, PRKAR2A and PRKAR2B. Binds the catalytic subunits of cAMP-dependent protein kinase. Interacts with MFHAS1. Interacts with TBC1D31; the interaction is direct and recruits PJA2 to centrosomes.

It is found in the cytoplasm. It localises to the cell membrane. Its subcellular location is the endoplasmic reticulum membrane. The protein localises to the golgi apparatus membrane. The protein resides in the synapse. It is found in the postsynaptic density. It localises to the cytoskeleton. Its subcellular location is the microtubule organizing center. The protein localises to the centrosome. It carries out the reaction S-ubiquitinyl-[E2 ubiquitin-conjugating enzyme]-L-cysteine + [acceptor protein]-L-lysine = [E2 ubiquitin-conjugating enzyme]-L-cysteine + N(6)-ubiquitinyl-[acceptor protein]-L-lysine.. Its pathway is protein modification; protein ubiquitination. Functionally, has E2-dependent E3 ubiquitin-protein ligase activity. Responsible for ubiquitination of cAMP-dependent protein kinase type I and type II-alpha/beta regulatory subunits and for targeting them for proteasomal degradation. Essential for PKA-mediated long-term memory processes. Through the ubiquitination of MFHAS1, positively regulates the TLR2 signaling pathway that leads to the activation of the downstream p38 and JNK MAP kinases and promotes the polarization of macrophages toward the pro-inflammatory M1 phenotype. Plays a role in ciliogenesis by ubiquitinating OFD1. This chain is E3 ubiquitin-protein ligase Praja-2 (Pja2), found in Mus musculus (Mouse).